The primary structure comprises 134 residues: UPF0412 protein YaaI (134 aa).

A signal peptide spans 1–23 (MRSVLTISASLLFGLALSSVAHA).

This sequence belongs to the UPF0412 family.

The chain is UPF0412 protein YaaI from Salmonella paratyphi B (strain ATCC BAA-1250 / SPB7).